A 184-amino-acid chain; its full sequence is Inactive ribonuclease-like protein 9 (184 aa).

The first 25 residues, M1–Q25, serve as a signal peptide directing secretion. Disulfide bonds link C93–C148, C111–C163, and C118–C125. 2 N-linked (GlcNAc...) asparagine glycosylation sites follow: N147 and N179.

This sequence belongs to the pancreatic ribonuclease family.

The protein resides in the secreted. Its function is as follows. Does not exhibit any ribonuclease activity. This Mus musculus (Mouse) protein is Inactive ribonuclease-like protein 9 (Rnase9).